The following is a 609-amino-acid chain: Chaperone protein DnaK (609 aa).

Thr-172 is modified (phosphothreonine; by autocatalysis). Positions 578 to 609 are disordered; that stretch reads QAQAQQQAGAGGAAKKDENVVDAEFEEVKDDK. Positions 597 to 609 are enriched in acidic residues; sequence VVDAEFEEVKDDK.

Belongs to the heat shock protein 70 family.

Its function is as follows. Acts as a chaperone. The protein is Chaperone protein DnaK of Geobacillus sp. (strain WCH70).